Consider the following 263-residue polypeptide: Phosphate-import ATP-binding protein PhnC (263 aa).

The ABC transporter domain maps to 11 to 254 (VIARDVTKRF…DVMAVYQRVE (244 aa)). 43-50 (GLSGSGKS) is a binding site for ATP.

It belongs to the ABC transporter superfamily. Phosphonate/phosphate importer (TC 3.A.1.9.2) family. As to quaternary structure, the complex is composed of two ATP-binding proteins (PhnC), two transmembrane proteins (PhnE) and a solute-binding protein (PhnD).

It is found in the cell membrane. It catalyses the reaction phosphate(out) + ATP + H2O = ADP + 2 phosphate(in) + H(+). Part of the ABC transporter complex PhnCDE involved in phosphate import. Responsible for energy coupling to the transport system. This is Phosphate-import ATP-binding protein PhnC (phnC) from Mycolicibacterium smegmatis (strain ATCC 700084 / mc(2)155) (Mycobacterium smegmatis).